The sequence spans 318 residues: Acetyl-coenzyme A carboxylase carboxyl transferase subunit alpha (318 aa).

Residues 38–292 (KLEKRLAKLE…NKTITKSLHA (255 aa)) enclose the CoA carboxyltransferase C-terminal domain.

The protein belongs to the AccA family. As to quaternary structure, acetyl-CoA carboxylase is a heterohexamer composed of biotin carboxyl carrier protein (AccB), biotin carboxylase (AccC) and two subunits each of ACCase subunit alpha (AccA) and ACCase subunit beta (AccD).

It is found in the cytoplasm. The enzyme catalyses N(6)-carboxybiotinyl-L-lysyl-[protein] + acetyl-CoA = N(6)-biotinyl-L-lysyl-[protein] + malonyl-CoA. The protein operates within lipid metabolism; malonyl-CoA biosynthesis; malonyl-CoA from acetyl-CoA: step 1/1. Its function is as follows. Component of the acetyl coenzyme A carboxylase (ACC) complex. First, biotin carboxylase catalyzes the carboxylation of biotin on its carrier protein (BCCP) and then the CO(2) group is transferred by the carboxyltransferase to acetyl-CoA to form malonyl-CoA. The sequence is that of Acetyl-coenzyme A carboxylase carboxyl transferase subunit alpha from Listeria welshimeri serovar 6b (strain ATCC 35897 / DSM 20650 / CCUG 15529 / CIP 8149 / NCTC 11857 / SLCC 5334 / V8).